Reading from the N-terminus, the 67-residue chain is Conotoxin Cp1.1 (67 aa).

The signal sequence occupies residues 1-26; sequence MMFRLTSVSCFLLVIACLNLFQVVLT. Disulfide bonds link cysteine 29–cysteine 43, cysteine 36–cysteine 48, cysteine 42–cysteine 52, and cysteine 47–cysteine 56. Tyrosine 60 is modified (tyrosine amide). A propeptide spanning residues 64–67 is cleaved from the precursor; the sequence is ATFQ.

Belongs to the conotoxin I2 superfamily. In terms of tissue distribution, expressed by the venom duct.

It is found in the secreted. In Conus capitaneus (Captain cone), this protein is Conotoxin Cp1.1.